The chain runs to 26 residues: Delta-conotoxin Am2766 (26 aa).

Cystine bridges form between Cys1-Cys16, Cys8-Cys20, and Cys15-Cys24. The residue at position 26 (Glu26) is a Glutamic acid 1-amide.

In terms of tissue distribution, expressed by the venom duct.

The protein resides in the secreted. Its function is as follows. Delta-conotoxins bind to site 6 of voltage-gated sodium channels (Nav) and inhibit the inactivation process. The polypeptide is Delta-conotoxin Am2766 (Conus amadis (Amadis cone)).